An 823-amino-acid chain; its full sequence is Lon protease (823 aa).

The region spanning 22-217 (LPLLPVRDVV…KVNEHLNKEH (196 aa)) is the Lon N-terminal domain. Position 369–376 (369–376 (GPPGVGKT)) interacts with ATP. One can recognise a Lon proteolytic domain in the interval 605-786 (KNEVGIVTGL…DDVLAVALET (182 aa)). Residues S692 and K735 contribute to the active site. Residues 788-823 (PPPPPASEGKPAATVKAPPRRGIAAPRKGAMAGAKS) are disordered.

It belongs to the peptidase S16 family. As to quaternary structure, homohexamer. Organized in a ring with a central cavity.

Its subcellular location is the cytoplasm. The catalysed reaction is Hydrolysis of proteins in presence of ATP.. Its function is as follows. ATP-dependent serine protease that mediates the selective degradation of mutant and abnormal proteins as well as certain short-lived regulatory proteins. Required for cellular homeostasis and for survival from DNA damage and developmental changes induced by stress. Degrades polypeptides processively to yield small peptide fragments that are 5 to 10 amino acids long. Binds to DNA in a double-stranded, site-specific manner. The sequence is that of Lon protease from Geobacter metallireducens (strain ATCC 53774 / DSM 7210 / GS-15).